The following is a 305-amino-acid chain: Protein FdhE homolog (305 aa).

Belongs to the FdhE family.

The protein resides in the cytoplasm. Functionally, necessary for formate dehydrogenase activity. In Haemophilus ducreyi (strain 35000HP / ATCC 700724), this protein is Protein FdhE homolog.